The sequence spans 177 residues: Bifunctional protein PyrR (177 aa).

Positions 97-109 match the PRPP-binding motif; it reads IILVDDVLYTGRT.

The protein belongs to the purine/pyrimidine phosphoribosyltransferase family. PyrR subfamily.

It carries out the reaction UMP + diphosphate = 5-phospho-alpha-D-ribose 1-diphosphate + uracil. Functionally, regulates the transcription of the pyrimidine nucleotide (pyr) operon in response to exogenous pyrimidines. Also displays a weak uracil phosphoribosyltransferase activity which is not physiologically significant. The chain is Bifunctional protein PyrR from Nitrosococcus oceani (strain ATCC 19707 / BCRC 17464 / JCM 30415 / NCIMB 11848 / C-107).